A 554-amino-acid chain; its full sequence is Glucose-6-phosphate isomerase (554 aa).

Catalysis depends on E359, which acts as the Proton donor. Active-site residues include H390 and K518.

Belongs to the GPI family.

The protein resides in the cytoplasm. The enzyme catalyses alpha-D-glucose 6-phosphate = beta-D-fructose 6-phosphate. The protein operates within carbohydrate biosynthesis; gluconeogenesis. It functions in the pathway carbohydrate degradation; glycolysis; D-glyceraldehyde 3-phosphate and glycerone phosphate from D-glucose: step 2/4. Functionally, catalyzes the reversible isomerization of glucose-6-phosphate to fructose-6-phosphate. In Pseudomonas syringae pv. tomato (strain ATCC BAA-871 / DC3000), this protein is Glucose-6-phosphate isomerase.